Reading from the N-terminus, the 222-residue chain is dTTP/UTP pyrophosphatase (222 aa).

Catalysis depends on Asp-83, which acts as the Proton acceptor.

The protein belongs to the Maf family. YhdE subfamily. It depends on a divalent metal cation as a cofactor.

It is found in the cytoplasm. The enzyme catalyses dTTP + H2O = dTMP + diphosphate + H(+). The catalysed reaction is UTP + H2O = UMP + diphosphate + H(+). Nucleoside triphosphate pyrophosphatase that hydrolyzes dTTP and UTP. May have a dual role in cell division arrest and in preventing the incorporation of modified nucleotides into cellular nucleic acids. The polypeptide is dTTP/UTP pyrophosphatase (Desulfitobacterium hafniense (strain Y51)).